The chain runs to 275 residues: Adenosylcobinamide-GDP ribazoletransferase (275 aa).

6 consecutive transmembrane segments (helical) span residues 53 to 73 (WFVF…TISL), 113 to 133 (VGSF…LGVS), 144 to 164 (LPFT…LYFV), 204 to 224 (FACI…PYFL), 225 to 245 (LSLL…KRWI), and 253 to 273 (LGAV…FVWI).

This sequence belongs to the CobS family. Requires Mg(2+) as cofactor.

It localises to the cell inner membrane. It catalyses the reaction alpha-ribazole + adenosylcob(III)inamide-GDP = adenosylcob(III)alamin + GMP + H(+). The enzyme catalyses alpha-ribazole 5'-phosphate + adenosylcob(III)inamide-GDP = adenosylcob(III)alamin 5'-phosphate + GMP + H(+). Its pathway is cofactor biosynthesis; adenosylcobalamin biosynthesis; adenosylcobalamin from cob(II)yrinate a,c-diamide: step 7/7. Functionally, joins adenosylcobinamide-GDP and alpha-ribazole to generate adenosylcobalamin (Ado-cobalamin). Also synthesizes adenosylcobalamin 5'-phosphate from adenosylcobinamide-GDP and alpha-ribazole 5'-phosphate. This is Adenosylcobinamide-GDP ribazoletransferase from Leptospira biflexa serovar Patoc (strain Patoc 1 / Ames).